The primary structure comprises 84 residues: Large ribosomal subunit protein bL27 (84 aa).

The interval 1–25 (MAHKKGAGSTKNGRDSKPKMLGVKR) is disordered.

It belongs to the bacterial ribosomal protein bL27 family.

The chain is Large ribosomal subunit protein bL27 from Dehalococcoides mccartyi (strain ATCC BAA-2266 / KCTC 15142 / 195) (Dehalococcoides ethenogenes (strain 195)).